Consider the following 492-residue polypeptide: 3-ketoacyl-CoA synthase 5 (492 aa).

The next 2 helical transmembrane spans lie at 20–40 (LINN…AIEL) and 59–79 (LLHI…YFMS). The region spanning 76-365 (YFMSKPRTVY…FLSSLIGRKI (290 aa)) is the FAE domain. Catalysis depends on residues cysteine 220, histidine 299, histidine 383, histidine 387, histidine 416, and asparagine 420.

This sequence belongs to the thiolase-like superfamily. Chalcone/stilbene synthases family. In terms of tissue distribution, expressed in siliques, flowers, leaves and seedlings.

The protein resides in the membrane. The enzyme catalyses a very-long-chain acyl-CoA + malonyl-CoA + H(+) = a very-long-chain 3-oxoacyl-CoA + CO2 + CoA. Its pathway is lipid metabolism; fatty acid biosynthesis. Inhibited by K3 herbicides such as alachlor, allidochlor, anilofos, cafenstrole and flufenacet. Strongly inhibited by metazachlor and mefluidide. In terms of biological role, mediates mostly the synthesis of VLCFAs from 26 to 30 carbons in length (e.g. C20:1, C26, C28, C30). The chain is 3-ketoacyl-CoA synthase 5 from Arabidopsis thaliana (Mouse-ear cress).